The primary structure comprises 297 residues: Acetyl-coenzyme A carboxylase carboxyl transferase subunit beta (297 aa).

Positions 1 to 23 (MSWIERILGRTSSSSSSSKSKVP) are disordered. In terms of domain architecture, CoA carboxyltransferase N-terminal spans 26-295 (VWTKCTSCEQ…PFKTAELIVE (270 aa)). Residues Cys30, Cys33, Cys49, and Cys52 each coordinate Zn(2+). The C4-type zinc-finger motif lies at 30-52 (CTSCEQVLYSEELKRNMHVCPKC).

This sequence belongs to the AccD/PCCB family. In terms of assembly, acetyl-CoA carboxylase is a heterohexamer composed of biotin carboxyl carrier protein (AccB), biotin carboxylase (AccC) and two subunits each of ACCase subunit alpha (AccA) and ACCase subunit beta (AccD). Zn(2+) is required as a cofactor.

It localises to the cytoplasm. The enzyme catalyses N(6)-carboxybiotinyl-L-lysyl-[protein] + acetyl-CoA = N(6)-biotinyl-L-lysyl-[protein] + malonyl-CoA. The protein operates within lipid metabolism; malonyl-CoA biosynthesis; malonyl-CoA from acetyl-CoA: step 1/1. Component of the acetyl coenzyme A carboxylase (ACC) complex. Biotin carboxylase (BC) catalyzes the carboxylation of biotin on its carrier protein (BCCP) and then the CO(2) group is transferred by the transcarboxylase to acetyl-CoA to form malonyl-CoA. The protein is Acetyl-coenzyme A carboxylase carboxyl transferase subunit beta of Actinobacillus pleuropneumoniae serotype 7 (strain AP76).